We begin with the raw amino-acid sequence, 481 residues long: Aspartyl/glutamyl-tRNA(Asn/Gln) amidotransferase subunit B (481 aa).

It belongs to the GatB/GatE family. GatB subfamily. Heterotrimer of A, B and C subunits.

The enzyme catalyses L-glutamyl-tRNA(Gln) + L-glutamine + ATP + H2O = L-glutaminyl-tRNA(Gln) + L-glutamate + ADP + phosphate + H(+). It carries out the reaction L-aspartyl-tRNA(Asn) + L-glutamine + ATP + H2O = L-asparaginyl-tRNA(Asn) + L-glutamate + ADP + phosphate + 2 H(+). In terms of biological role, allows the formation of correctly charged Asn-tRNA(Asn) or Gln-tRNA(Gln) through the transamidation of misacylated Asp-tRNA(Asn) or Glu-tRNA(Gln) in organisms which lack either or both of asparaginyl-tRNA or glutaminyl-tRNA synthetases. The reaction takes place in the presence of glutamine and ATP through an activated phospho-Asp-tRNA(Asn) or phospho-Glu-tRNA(Gln). The polypeptide is Aspartyl/glutamyl-tRNA(Asn/Gln) amidotransferase subunit B (Pseudomonas fluorescens (strain Pf0-1)).